The primary structure comprises 665 residues: PR5-like receptor kinase (665 aa).

Positions 1–24 (MVEGFSLSLMFLLVSHFFVSGVMS) are cleaved as a signal peptide. At 25 to 276 (RNFTIENKCD…TKQKSSWKLK (252 aa)) the chain is on the extracellular side. 2 N-linked (GlcNAc...) asparagine glycosylation sites follow: Asn-26 and Asn-88. Intrachain disulfides connect Cys-33/Cys-249, Cys-81/Cys-91, Cys-96/Cys-103, Cys-153/Cys-238, Cys-158/Cys-221, Cys-166/Cys-184, Cys-188/Cys-197, and Cys-198/Cys-208. A glycan (N-linked (GlcNAc...) asparagine) is linked at Asn-163. The N-linked (GlcNAc...) asparagine glycan is linked to Asn-233. The chain crosses the membrane as a helical span at residues 277–297 (LIVGVSAALTLMILIVVVIIV). The Cytoplasmic segment spans residues 298-665 (RTKNMRNSEW…DVLQHGSRSS (368 aa)). Residues 331–620 (NSFAHVLGKG…ALQVPPNPLL (290 aa)) enclose the Protein kinase domain. ATP is bound by residues 337 to 345 (LGKGGFGTV) and Lys-360. Residue Asp-455 is the Proton acceptor of the active site.

The protein in the N-terminal section; belongs to the thaumatin family. This sequence in the C-terminal section; belongs to the protein kinase superfamily. Ser/Thr protein kinase family. Autophosphorylated in vitro. Expressed in roots. Expressed at low levels in stems.

The protein localises to the membrane. It carries out the reaction L-seryl-[protein] + ATP = O-phospho-L-seryl-[protein] + ADP + H(+). It catalyses the reaction L-threonyl-[protein] + ATP = O-phospho-L-threonyl-[protein] + ADP + H(+). Functionally, possesses kinase activity in vitro. This Arabidopsis thaliana (Mouse-ear cress) protein is PR5-like receptor kinase.